The chain runs to 509 residues: Dihydrolipoyl dehydrogenase, mitochondrial (509 aa).

A mitochondrion-targeting transit peptide spans 1 to 35; the sequence is MQSWSRVYCTLAKRGHFNRIAHGLQGVSAVPLRTY. Residue Lys66 is modified to N6-acetyllysine; alternate. At Lys66 the chain carries N6-succinyllysine; alternate. Residues 71 to 80 and Lys89 each bind FAD; that span reads EKNETLGGTC. Cys80 and Cys85 are disulfide-bonded. N6-acetyllysine; alternate is present on residues Lys104, Lys122, Lys132, and Lys143. N6-succinyllysine; alternate occurs at positions 104, 122, 132, and 143. Gly154 contributes to the FAD binding site. Residues Lys159 and Lys166 each carry the N6-succinyllysine modification. Residue 183-185 participates in FAD binding; it reads TGS. Residues 220 to 227 and Glu243 contribute to the NAD(+) site; that span reads GAGVIGVE. N6-succinyllysine occurs at positions 273 and 277. Val278 serves as a coordination point for NAD(+). Phosphoserine occurs at positions 285 and 297. Gly314 serves as a coordination point for NAD(+). The residue at position 346 (Lys346) is an N6-acetyllysine. FAD contacts are provided by residues Asp355 and 361-364; that span reads MLAH. Residue Lys410 is modified to N6-acetyllysine; alternate. At Lys410 the chain carries N6-succinyllysine; alternate. Lys417 and Lys420 each carry N6-acetyllysine. Lys430 is subject to N6-succinyllysine. His487 acts as the Proton acceptor in catalysis. Ser502 is modified (phosphoserine). Lys505 carries the post-translational modification N6-acetyllysine; alternate. Lys505 bears the N6-succinyllysine; alternate mark.

The protein belongs to the class-I pyridine nucleotide-disulfide oxidoreductase family. In terms of assembly, homodimer. Part of the multimeric pyruvate dehydrogenase complex that contains multiple copies of pyruvate dehydrogenase (subunits PDHA (PDHA1 or PDHA2) and PDHB, E1), dihydrolipoamide acetyltransferase (DLAT, E2) and lipoamide dehydrogenase (DLD, E3). These subunits are bound to an inner core composed of about 48 DLAT and 12 PDHX molecules (by non covalent bonds). The 2-oxoglutarate dehydrogenase complex is composed of OGDH (2-oxoglutarate dehydrogenase; E1), DLST (dihydrolipoamide succinyltransferase; E2), DLD (dihydrolipoamide dehydrogenase; E3) and the assembly factor KGD4. It contains multiple copies of the three enzymatic components (E1, E2 and E3). In the nucleus, the 2-oxoglutarate dehydrogenase complex associates with KAT2A. Interacts with PDHX. FAD is required as a cofactor. Post-translationally, tyrosine phosphorylated. As to expression, expressed in heart (at protein level).

The protein localises to the mitochondrion matrix. Its subcellular location is the nucleus. It is found in the cell projection. It localises to the cilium. The protein resides in the flagellum. The protein localises to the cytoplasmic vesicle. Its subcellular location is the secretory vesicle. It is found in the acrosome. The catalysed reaction is N(6)-[(R)-dihydrolipoyl]-L-lysyl-[protein] + NAD(+) = N(6)-[(R)-lipoyl]-L-lysyl-[protein] + NADH + H(+). Functionally, lipoamide dehydrogenase is a component of the glycine cleavage system as well as an E3 component of three alpha-ketoacid dehydrogenase complexes (pyruvate-, alpha-ketoglutarate-, and branched-chain amino acid-dehydrogenase complex). The 2-oxoglutarate dehydrogenase complex is mainly active in the mitochondrion. A fraction of the 2-oxoglutarate dehydrogenase complex also localizes in the nucleus and is required for lysine succinylation of histones: associates with KAT2A on chromatin and provides succinyl-CoA to histone succinyltransferase KAT2A. In monomeric form may have additional moonlighting function as serine protease. Involved in the hyperactivation of spermatazoa during capacitation and in the spermatazoal acrosome reaction. This chain is Dihydrolipoyl dehydrogenase, mitochondrial (DLD), found in Sus scrofa (Pig).